The chain runs to 323 residues: Pectate lyase A (323 aa).

The N-terminal stretch at 1–31 (MTNFKWIVAAAGLLFGQVLAAPTATSTHAKR) is a signal peptide. N95 is a glycosylation site (N-linked (GlcNAc...) asparagine). D136, D165, and D169 together coordinate Ca(2+). R222 is an active-site residue.

Belongs to the polysaccharide lyase 1 family. The cofactor is Ca(2+).

Its subcellular location is the secreted. The enzyme catalyses Eliminative cleavage of (1-&gt;4)-alpha-D-galacturonan to give oligosaccharides with 4-deoxy-alpha-D-galact-4-enuronosyl groups at their non-reducing ends.. In terms of biological role, pectinolytic enzyme consist of four classes of enzymes: pectin lyase, polygalacturonase, pectin methylesterase and rhamnogalacturonase. Among pectinolytic enzymes, pectin lyase is the most important in depolymerization of pectin, since it cleaves internal glycosidic bonds of highly methylated pectins. Favors pectate, the anion, over pectin, the methyl ester. The chain is Pectate lyase A (plyA) from Aspergillus niger.